Consider the following 364-residue polypeptide: tRNA 2-selenouridine synthase (364 aa).

One can recognise a Rhodanese domain in the interval 14-136 (VLNNTPLIDV…AFRNWLMQET (123 aa)). C97 serves as the catalytic S-selanylcysteine intermediate.

Belongs to the SelU family. Monomer.

The catalysed reaction is 5-methylaminomethyl-2-thiouridine(34) in tRNA + selenophosphate + (2E)-geranyl diphosphate + H2O + H(+) = 5-methylaminomethyl-2-selenouridine(34) in tRNA + (2E)-thiogeraniol + phosphate + diphosphate. It catalyses the reaction 5-methylaminomethyl-2-thiouridine(34) in tRNA + (2E)-geranyl diphosphate = 5-methylaminomethyl-S-(2E)-geranyl-thiouridine(34) in tRNA + diphosphate. It carries out the reaction 5-methylaminomethyl-S-(2E)-geranyl-thiouridine(34) in tRNA + selenophosphate + H(+) = 5-methylaminomethyl-2-(Se-phospho)selenouridine(34) in tRNA + (2E)-thiogeraniol. The enzyme catalyses 5-methylaminomethyl-2-(Se-phospho)selenouridine(34) in tRNA + H2O = 5-methylaminomethyl-2-selenouridine(34) in tRNA + phosphate. In terms of biological role, involved in the post-transcriptional modification of the uridine at the wobble position (U34) of tRNA(Lys), tRNA(Glu) and tRNA(Gln). Catalyzes the conversion of 2-thiouridine (S2U-RNA) to 2-selenouridine (Se2U-RNA). Acts in a two-step process involving geranylation of 2-thiouridine (S2U) to S-geranyl-2-thiouridine (geS2U) and subsequent selenation of the latter derivative to 2-selenouridine (Se2U) in the tRNA chain. The sequence is that of tRNA 2-selenouridine synthase from Sulfurovum sp. (strain NBC37-1).